A 346-amino-acid polypeptide reads, in one-letter code: Uroporphyrinogen decarboxylase (346 aa).

Substrate contacts are provided by residues 23 to 27, Asp-73, Tyr-151, Ser-206, and His-321; that span reads RQAGR.

The protein belongs to the uroporphyrinogen decarboxylase family. In terms of assembly, homodimer.

Its subcellular location is the cytoplasm. The enzyme catalyses uroporphyrinogen III + 4 H(+) = coproporphyrinogen III + 4 CO2. Its pathway is porphyrin-containing compound metabolism; protoporphyrin-IX biosynthesis; coproporphyrinogen-III from 5-aminolevulinate: step 4/4. In terms of biological role, catalyzes the decarboxylation of four acetate groups of uroporphyrinogen-III to yield coproporphyrinogen-III. This chain is Uroporphyrinogen decarboxylase, found in Aliarcobacter butzleri (strain RM4018) (Arcobacter butzleri).